The primary structure comprises 75 residues: Endogenous retrovirus group K member 5 Np9 protein (75 aa).

Positions 22–43 (TAPKRQRPSRTGHDDDGGFVEK) are disordered. Positions 32–43 (TGHDDDGGFVEK) are enriched in basic and acidic residues.

The protein localises to the nucleus. Its function is as follows. May possess a function in tumorigenesis. The protein is Endogenous retrovirus group K member 5 Np9 protein (ERVK-5) of Homo sapiens (Human).